The chain runs to 588 residues: L-fucose isomerase (588 aa).

Active-site proton acceptor residues include E335 and D359. Mn(2+)-binding residues include E335, D359, and H525.

It belongs to the L-fucose isomerase family. Mn(2+) is required as a cofactor.

It localises to the cytoplasm. It carries out the reaction L-fucose = L-fuculose. The protein operates within carbohydrate degradation; L-fucose degradation; L-lactaldehyde and glycerone phosphate from L-fucose: step 1/3. Its function is as follows. Converts the aldose L-fucose into the corresponding ketose L-fuculose. This Streptococcus pneumoniae serotype 2 (strain D39 / NCTC 7466) protein is L-fucose isomerase.